The sequence spans 493 residues: MQSTGAPGLAQSAVLQLSAMGERSRELGGALREPERKRRLLLVVVCVALLLDNMLYMVIVPIIPDYLADLRGERGNSSADLDIQIGVLFASKALLQLLVNPLSGTFIDRVGYDLPLLIGLLVMFLSTCIFAFAENYGTLFAARSLQGLGSAFADTSGIAMIADKFTEEAERSRALGIALAFISFGSLVAPPFGGILYEFAGKRVPFIVLACVCLADGVLLLTVVKPFSDRTRENMPVGTPIHRLMVDPYIAVVAGALTVCNIPLAFLEPTIANWMESTMDASKWQMGLVWLPAFLPHVLGVYITVRLAARYPERQWFYGALGMVIIGASSCTVPACKTFGELVFPLCGICFGIALVDTALLPTLAFLVDVRHVSVYGSVYAIADISYSVAYAMGPVVAGQIVHNLGFVQLNLGMGLVNVLYAPALLLLRPVCQIKPSFSERNVLLEEGPSGLYDSIRLEERALRRKGLSAGAGTEHGLRGRSEEEEESGPESA.

Residues 1–39 lie on the Cytoplasmic side of the membrane; sequence MQSTGAPGLAQSAVLQLSAMGERSRELGGALREPERKRR. A helical membrane pass occupies residues 40–60; sequence LLLVVVCVALLLDNMLYMVIV. Over 61-86 the chain is Lumenal, vesicle; that stretch reads PIIPDYLADLRGERGNSSADLDIQIG. N-linked (GlcNAc...) asparagine glycosylation is present at N76. Residues 87 to 107 traverse the membrane as a helical segment; it reads VLFASKALLQLLVNPLSGTFI. Over 108-113 the chain is Cytoplasmic; that stretch reads DRVGYD. Residues 114–134 form a helical membrane-spanning segment; it reads LPLLIGLLVMFLSTCIFAFAE. At 135–143 the chain is on the lumenal, vesicle side; the sequence is NYGTLFAAR. A helical membrane pass occupies residues 144–164; it reads SLQGLGSAFADTSGIAMIADK. At 165–174 the chain is on the cytoplasmic side; the sequence is FTEEAERSRA. The chain crosses the membrane as a helical span at residues 175–195; sequence LGIALAFISFGSLVAPPFGGI. Residues 196–203 are Lumenal, vesicle-facing; that stretch reads LYEFAGKR. Residues 204-224 form a helical membrane-spanning segment; the sequence is VPFIVLACVCLADGVLLLTVV. Residues 225–247 are Cytoplasmic-facing; sequence KPFSDRTRENMPVGTPIHRLMVD. The helical transmembrane segment at 248–268 threads the bilayer; sequence PYIAVVAGALTVCNIPLAFLE. Residues 269–284 lie on the Lumenal, vesicle side of the membrane; sequence PTIANWMESTMDASKW. A helical transmembrane segment spans residues 285–305; the sequence is QMGLVWLPAFLPHVLGVYITV. Over 306–315 the chain is Cytoplasmic; that stretch reads RLAARYPERQ. The chain crosses the membrane as a helical span at residues 316–336; the sequence is WFYGALGMVIIGASSCTVPAC. The Lumenal, vesicle portion of the chain corresponds to 337–347; the sequence is KTFGELVFPLC. A helical transmembrane segment spans residues 348–368; the sequence is GICFGIALVDTALLPTLAFLV. Residues 369–378 are Cytoplasmic-facing; sequence DVRHVSVYGS. The chain crosses the membrane as a helical span at residues 379–399; it reads VYAIADISYSVAYAMGPVVAG. At 400 to 406 the chain is on the lumenal, vesicle side; that stretch reads QIVHNLG. Residues 407–427 form a helical membrane-spanning segment; that stretch reads FVQLNLGMGLVNVLYAPALLL. Over 428-493 the chain is Cytoplasmic; sequence LRPVCQIKPS…EEEESGPESA (66 aa). A disordered region spans residues 467-493; sequence GLSAGAGTEHGLRGRSEEEEESGPESA. Residues 483–493 are compositionally biased toward acidic residues; sequence EEEEESGPESA.

This sequence belongs to the major facilitator superfamily. Vesicular transporter family.

It is found in the membrane. Its function is as follows. Involved in acetylcholine transport into synaptic vesicles. In Danio rerio (Zebrafish), this protein is Probable vesicular acetylcholine transporter-B (slc18a3b).